The sequence spans 625 residues: MEEEGGGRSCGTTRELQKLKQQAMEYYRENDVPRRLEELLNSTFYLQPADVYGHLANCFSKLAKPPTICKIVGKDVLDGLGLPTLQVDIFCTIQNFPKNVCSVVISTHFEVHENALPELAKAEEAERASAVSTAVQWVNSTITHELQGMAPSDQAEVDHLLRIFFASKVQEDKGRKELEKSLEYSTVPTPLPPVPPPPPPPPPTKKKGQKPGRKDTITEKPIAPAEPVEPVLSGSMAIGAVSLAVAKACAMLLNKPLYLNIALLKHNQEQPTTLSMPLLMVSLVSCGKSSSGKLNLMKEVICIPHPELTTKQGVEMLMEMQKHINKIIEMPSPPKAETKKGHDGSKRGQQQITGKMSHLGCLTINCDSIEQPLLLIQEICANLGLELGTNLHLAINCAGHELMDYNKGKYEVIMGTYKNAAEMVDLYVDLINKYPSIIALIDPFRKEDSEQWDSIYHALGSRCYIIAGTASKSISKLLEQGNISIPKSNGLIIKHTNQTTMSDLVEITNLIDSKKHITVFGSTEGESSDDSLVDLAVGLGVRFIKLGGLSRGERVTKYNRLLTIEEELVQNGTLGFKEEHTFFYFNEEAEKAAEALEAAAAREPLVPTFPTQGVEESAETGASSG.

The disordered stretch occupies residues 184–226 (YSTVPTPLPPVPPPPPPPPPTKKKGQKPGRKDTITEKPIAPAE). Pro residues predominate over residues 189 to 203 (TPLPPVPPPPPPPPP). Valine 300 contributes to the substrate binding site. Residues 331 to 350 (PSPPKAETKKGHDGSKRGQQ) are disordered. Residues 336 to 346 (AETKKGHDGSK) are compositionally biased toward basic and acidic residues. The active-site Proton acceptor is asparagine 497. Residue glycine 548 coordinates substrate. The interval 604 to 625 (PLVPTFPTQGVEESAETGASSG) is disordered.

It belongs to the enolase family. As to quaternary structure, interacts with ENO1 and AKAP4. Synthesized as an approximately 70-kDa precursor, which then undergoes proteolytic cleavage to an approximately 60-kDa enzyme; HOATZ associates directly or indirectly with ENO4 to mediate this process before its transport to mature flagella.

It catalyses the reaction (2R)-2-phosphoglycerate = phosphoenolpyruvate + H2O. The protein operates within carbohydrate degradation; glycolysis; pyruvate from D-glyceraldehyde 3-phosphate: step 4/5. Functionally, may be required for sperm motility and function. The chain is Enolase 4 from Homo sapiens (Human).